Consider the following 213-residue polypeptide: Chloramphenicol acetyltransferase 3 (213 aa).

The active-site Proton acceptor is H189.

The protein belongs to the chloramphenicol acetyltransferase family. As to quaternary structure, homotrimer.

The enzyme catalyses chloramphenicol + acetyl-CoA = chloramphenicol 3-acetate + CoA. Functionally, this enzyme is an effector of chloramphenicol resistance in bacteria. This chain is Chloramphenicol acetyltransferase 3 (cat3), found in Escherichia coli.